The primary structure comprises 211 residues: Pyridoxine/pyridoxamine 5'-phosphate oxidase (211 aa).

Substrate contacts are provided by residues 7-10 and Lys-65; that span reads RREY. FMN is bound by residues 60–65, 75–76, Arg-81, Lys-82, and Gln-104; these read RTVLLK and YT. Substrate-binding residues include Tyr-122, Arg-126, and Ser-130. FMN-binding positions include 139–140 and Trp-184; that span reads QS. 190 to 192 serves as a coordination point for substrate; sequence RLH. Position 194 (Arg-194) interacts with FMN.

The protein belongs to the pyridoxamine 5'-phosphate oxidase family. Homodimer. FMN is required as a cofactor.

It catalyses the reaction pyridoxamine 5'-phosphate + O2 + H2O = pyridoxal 5'-phosphate + H2O2 + NH4(+). The enzyme catalyses pyridoxine 5'-phosphate + O2 = pyridoxal 5'-phosphate + H2O2. It participates in cofactor metabolism; pyridoxal 5'-phosphate salvage; pyridoxal 5'-phosphate from pyridoxamine 5'-phosphate: step 1/1. The protein operates within cofactor metabolism; pyridoxal 5'-phosphate salvage; pyridoxal 5'-phosphate from pyridoxine 5'-phosphate: step 1/1. Catalyzes the oxidation of either pyridoxine 5'-phosphate (PNP) or pyridoxamine 5'-phosphate (PMP) into pyridoxal 5'-phosphate (PLP). The sequence is that of Pyridoxine/pyridoxamine 5'-phosphate oxidase from Aeromonas hydrophila subsp. hydrophila (strain ATCC 7966 / DSM 30187 / BCRC 13018 / CCUG 14551 / JCM 1027 / KCTC 2358 / NCIMB 9240 / NCTC 8049).